Reading from the N-terminus, the 295-residue chain is G1/S-specific cyclin-D1 (295 aa).

In terms of domain architecture, Cyclin N-terminal spans 28–152 (LRAMLKTEET…LLVNKLKWNL (125 aa)). Lys-269 participates in a covalent cross-link: Glycyl lysine isopeptide (Lys-Gly) (interchain with G-Cter in ubiquitin). The disordered stretch occupies residues 269–295 (KATEEEGEVEEEAGLACTPTDVRDVDI). Thr-286 bears the Phosphothreonine mark.

It belongs to the cyclin family. Cyclin D subfamily. Interacts with either CDK4 or CDK6 protein kinase to form a serine/threonine kinase holoenzyme complex. The cyclin subunit imparts substrate specificity to the complex. Component of the ternary complex CCND1/CDK4/CDKN1B required for nuclear translocation and modulation of CDK4-mediated kinase activity. Interacts directly with CDKN1B. Can form similar complexes with either CDKN1A or CDKN2A. Interacts with UHRF2; the interaction ubiquitinates CCND1 and appears to occur independently of phosphorylation. Interacts with USP2. Interacts (via cyclin N-terminal domain) with INSM1 (via N-terminal region); the interaction competes with the binding of CCND1 to CDK4 during cell cycle progression and inhibits CDK4 activity. Interacts with CDK4; the interaction is prevented with the binding of CCND1 to INSM1 during cell cycle progression. In terms of processing, phosphorylation at Thr-286 by MAP kinases is required for ubiquitination and degradation by the DCX(AMBRA1) complex. It also plays an essential role for recognition by the FBXO31 component of SCF (SKP1-cullin-F-box) protein ligase complex following DNA damage. Post-translationally, ubiquitinated at Lys-269 by the DCX(AMBRA1) complex during the transition from G1 to S cell phase, leading to its degradation: ubiquitination is dependent on Thr-286 phosphorylation. The DCX(AMBRA1) complex represents the major regulator of CCND1 stability during the G1/S transition. Also ubiquitinated by the SCF(FBXO4) and Cul7-RING(FBXW8) ubiquitin-protein ligase complexes. Following DNA damage it is ubiquitinated by the SCF(FBXO31) protein ligase complex. SCF(FBXO31) ubiquitination is dependent on Thr-286 phosphorylation. Ubiquitinated also by UHRF2 apparently in a phosphorylation-independent manner. Ubiquitination leads to its degradation and G1 arrest. Deubiquitinated by USP2; leading to its stabilization.

It localises to the nucleus. The protein localises to the cytoplasm. Its subcellular location is the nucleus membrane. Regulatory component of the cyclin D1-CDK4 (DC) complex that phosphorylates and inhibits members of the retinoblastoma (RB) protein family including RB1 and regulates the cell-cycle during G(1)/S transition. Phosphorylation of RB1 allows dissociation of the transcription factor E2F from the RB/E2F complex and the subsequent transcription of E2F target genes which are responsible for the progression through the G(1) phase. Hypophosphorylates RB1 in early G(1) phase. Cyclin D-CDK4 complexes are major integrators of various mitogenenic and antimitogenic signals. Also a substrate for SMAD3, phosphorylating SMAD3 in a cell-cycle-dependent manner and repressing its transcriptional activity. Component of the ternary complex, cyclin D1/CDK4/CDKN1B, required for nuclear translocation and activity of the cyclin D-CDK4 complex. Exhibits transcriptional corepressor activity with INSM1 on the NEUROD1 and INS promoters in a cell cycle-independent manner. This chain is G1/S-specific cyclin-D1 (Ccnd1), found in Rattus norvegicus (Rat).